The primary structure comprises 340 residues: Phosphoribosylformylglycinamidine cyclo-ligase (340 aa).

This sequence belongs to the AIR synthase family.

It is found in the cytoplasm. It carries out the reaction 2-formamido-N(1)-(5-O-phospho-beta-D-ribosyl)acetamidine + ATP = 5-amino-1-(5-phospho-beta-D-ribosyl)imidazole + ADP + phosphate + H(+). It functions in the pathway purine metabolism; IMP biosynthesis via de novo pathway; 5-amino-1-(5-phospho-D-ribosyl)imidazole from N(2)-formyl-N(1)-(5-phospho-D-ribosyl)glycinamide: step 2/2. The protein is Phosphoribosylformylglycinamidine cyclo-ligase of Streptococcus pneumoniae serotype 4 (strain ATCC BAA-334 / TIGR4).